The following is a 240-amino-acid chain: Ribonuclease 3 (240 aa).

Residues 9–141 (VEEFQKETGI…LLAAIYLDQG (133 aa)) form the RNase III domain. Glu54 contributes to the Mg(2+) binding site. Asp58 is a catalytic residue. 2 residues coordinate Mg(2+): Asp127 and Glu130. Residue Glu130 is part of the active site. A DRBM domain is found at 168 to 237 (DYKTALQEIV…ARIAYEKLLK (70 aa)).

Belongs to the ribonuclease III family. In terms of assembly, homodimer. The cofactor is Mg(2+).

It is found in the cytoplasm. The enzyme catalyses Endonucleolytic cleavage to 5'-phosphomonoester.. Digests double-stranded RNA. Involved in the processing of primary rRNA transcript to yield the immediate precursors to the large and small rRNAs (23S and 16S). Also processes some mRNAs, and tRNAs when they are encoded in the rRNA operon. Probably processes pre-crRNA and tracrRNA of type II CRISPR loci if present in the organism. This chain is Ribonuclease 3 (rnc), found in Thermotoga maritima (strain ATCC 43589 / DSM 3109 / JCM 10099 / NBRC 100826 / MSB8).